Here is a 444-residue protein sequence, read N- to C-terminus: Glutamate-1-semialdehyde 2,1-aminomutase (444 aa).

Residue Lys-267 is modified to N6-(pyridoxal phosphate)lysine.

The protein belongs to the class-III pyridoxal-phosphate-dependent aminotransferase family. HemL subfamily. In terms of assembly, homodimer. It depends on pyridoxal 5'-phosphate as a cofactor.

The protein localises to the cytoplasm. The catalysed reaction is (S)-4-amino-5-oxopentanoate = 5-aminolevulinate. It participates in porphyrin-containing compound metabolism; protoporphyrin-IX biosynthesis; 5-aminolevulinate from L-glutamyl-tRNA(Glu): step 2/2. This Xylella fastidiosa (strain M12) protein is Glutamate-1-semialdehyde 2,1-aminomutase.